A 204-amino-acid chain; its full sequence is MNRPLIVASLPVTSPGDISRVKDIDADLVELRLDYSREFPRPQDLLPYRDRILVTLRDREEGGQGNFTDNFKETFLNELMKLGILYDVEASFLSRRRVQFREKVVSAHYFHRLPSREEVDCLFSTYREAFTVKIAVSNLPGYREILSYISTKPGSTFMPMSPDPLERLAISLLGSRLLYTYVDSPTATGQLHYLEAKRILNCLF.

Residues serine 9, 30 to 32 (ELR), and arginine 57 contribute to the 3-dehydroquinate site. Histidine 108 serves as the catalytic Proton donor/acceptor. Catalysis depends on lysine 133, which acts as the Schiff-base intermediate with substrate. 3-dehydroquinate-binding residues include arginine 167, threonine 186, and glutamine 190.

This sequence belongs to the type-I 3-dehydroquinase family. As to quaternary structure, homodimer.

It catalyses the reaction 3-dehydroquinate = 3-dehydroshikimate + H2O. Its pathway is metabolic intermediate biosynthesis; chorismate biosynthesis; chorismate from D-erythrose 4-phosphate and phosphoenolpyruvate: step 3/7. Involved in the third step of the chorismate pathway, which leads to the biosynthesis of aromatic amino acids. Catalyzes the cis-dehydration of 3-dehydroquinate (DHQ) and introduces the first double bond of the aromatic ring to yield 3-dehydroshikimate. This is 3-dehydroquinate dehydratase from Metallosphaera sedula (strain ATCC 51363 / DSM 5348 / JCM 9185 / NBRC 15509 / TH2).